The primary structure comprises 470 residues: Pheromone a factor receptor (470 aa).

Residues 1-5 (MSYKS) lie on the Extracellular side of the membrane. The helical transmembrane segment at 6–23 (AIIGLCLLAVILLAPPLA) threads the bilayer. Residues 24–29 (WHSHTK) are Cytoplasmic-facing. The helical transmembrane segment at 30–53 (NIPAIILITWLLTMNLTCIVDAAI) threads the bilayer. Over 54–70 (WSDDDFLTRWDGKGWCD) the chain is Extracellular. The helical transmembrane segment at 71–98 (IVIKLQVGANIGISCAVTNIIYNLHTIL) threads the bilayer. At 99–116 (KADSVLPDLSSWTKIVKD) the chain is on the cytoplasmic side. Residues 117–134 (LVISLFTPVMVMGFSYLL) traverse the membrane as a helical segment. The Extracellular portion of the chain corresponds to 135–155 (QVFRYGIARYNGCQNLLSPTW). A helical transmembrane segment spans residues 156 to 183 (ITTVLYTMWMLIWSFVGAVYATLVLFVF). At 184 to 205 (YKKRKDVRDILHCTNSGLNLTR) the chain is on the cytoplasmic side. The chain crosses the membrane as a helical span at residues 206 to 228 (FARLLIFCFIIILVMFPFSVYTF). At 229 to 266 (VQDLQQVEGHYTFKNTHSSTIWNTIIKFDPGRPIYNIW) the chain is on the extracellular side. The chain crosses the membrane as a helical span at residues 267-285 (LYVLMSYLVFLIFGLGSDA). Residues 286-470 (LHMYSKFLRS…EHSSENTAGP (185 aa)) are Cytoplasmic-facing. The segment at 300–470 (FVLDMWKRFI…EHSSENTAGP (171 aa)) is hydrophilic. A disordered region spans residues 440–470 (NFEGESLCYSPASKEENSSSNEHSSENTAGP).

The protein belongs to the G-protein coupled receptor 4 family.

Its subcellular location is the membrane. Its function is as follows. Receptor for the peptide pheromone a factor. This is Pheromone a factor receptor (STE3) from Saccharomyces cerevisiae (strain ATCC 204508 / S288c) (Baker's yeast).